A 713-amino-acid polypeptide reads, in one-letter code: Fibroblast growth factor receptor 4 (713 aa).

An N-terminal signal peptide occupies residues 1–20 (MLPLWLVLAGLLLAVGPAAS). The tract at residues 21-54 (HRGEMEPDSLASGDDDEDSDGDGPHGDRSEEPVY) is disordered. Topologically, residues 21-281 (HRGEMEPDSL…AETSEAKYTD (261 aa)) are extracellular. Basic and acidic residues predominate over residues 42-54 (DGPHGDRSEEPVY). 2 Ig-like C2-type domains span residues 59–152 (PYWT…YLLD) and 161–261 (PILQ…AWLT). Cysteine 84 and cysteine 136 are disulfide-bonded. Residues asparagine 133, asparagine 170, asparagine 202, asparagine 223, and asparagine 234 are each glycosylated (N-linked (GlcNAc...) asparagine). Cysteine 183 and cysteine 245 are oxidised to a cystine. Residues 282-302 (IIIYTSGSLAVAMALIIVVLC) form a helical membrane-spanning segment. Residues 303–713 (RMQTQSSKQP…CLFSCPSGRT (411 aa)) are Cytoplasmic-facing. Residues 379–667 (LVLGKPLGEG…ILAAISEEYL (289 aa)) form the Protein kinase domain. Residues 385-393 (LGEGCFGQV) and lysine 415 each bind ATP. The active-site Proton acceptor is the aspartate 524. 3 positions are modified to phosphotyrosine; by autocatalysis: tyrosine 554, tyrosine 555, and tyrosine 666.

This sequence belongs to the protein kinase superfamily. Tyr protein kinase family. Fibroblast growth factor receptor subfamily. Monomer. Homodimer after ligand binding. Interacts with FGF1, FGF2, FGF4, FGF6, FGF8, FGF9, FGF16, FGF17, FGF18, FGF19, FGF21 and FGF23 (in vitro). Binding affinity for FGF family members is enhanced by interactions between FGFs and heparan sulfate proteoglycans. Interacts with KLB; this strongly increases the affinity for FGF19 and FGF23. Affinity for FGF19 is strongly increased by KLB and sulfated glycosaminoglycans. KLB and KL both interact with the core-glycosylated FGFR4 in the endoplasmic reticulum and promote its degradation, so that only FGFR4 with fully mature N-glycans is expressed at the cell surface. Identified in a complex with NCAM1, CDH2, PLCG1, FRS2, SRC, SHC1, GAP43 and CTTN. Interacts with MMP14 and HIP1. Interacts with STAT3. N-glycosylated. Full maturation of the glycan chains in the Golgi is essential for high affinity interaction with FGF19. Post-translationally, ubiquitinated. Subject to proteasomal degradation when not fully glycosylated. In terms of processing, autophosphorylated. Binding of FGF family members together with heparan sulfate proteoglycan or heparin promotes receptor dimerization and autophosphorylation on tyrosine residues. Autophosphorylation occurs in trans between the two FGFR molecules present in the dimer.

The protein localises to the cell membrane. The protein resides in the endosome. Its subcellular location is the endoplasmic reticulum. It catalyses the reaction L-tyrosyl-[protein] + ATP = O-phospho-L-tyrosyl-[protein] + ADP + H(+). Present in an inactive conformation in the absence of bound ligand. Ligand binding leads to dimerization and activation by autophosphorylation on tyrosine residues. Functionally, tyrosine-protein kinase that acts as a cell-surface receptor for fibroblast growth factors and plays a role in the regulation of cell proliferation, differentiation and migration, and in regulation of lipid metabolism, bile acid biosynthesis, glucose uptake, vitamin D metabolism and phosphate homeostasis. Required for normal down-regulation of the expression of CYP7A1, the rate-limiting enzyme in bile acid synthesis, in response to FGF19. Phosphorylates PLCG1 and FRS2. Ligand binding leads to the activation of several signaling cascades. Activation of PLCG1 leads to the production of the cellular signaling molecules diacylglycerol and inositol 1,4,5-trisphosphate. Phosphorylation of FRS2 triggers recruitment of GRB2, GAB1, PIK3R1 and SOS1, and mediates activation of RAS, MAPK1/ERK2, MAPK3/ERK1 and the MAP kinase signaling pathway, as well as of the AKT1 signaling pathway. Promotes SRC-dependent phosphorylation of the matrix protease MMP14 and its lysosomal degradation. FGFR4 signaling is down-regulated by receptor internalization and degradation; MMP14 promotes internalization and degradation of FGFR4. The sequence is that of Fibroblast growth factor receptor 4 (FGFR4) from Coturnix coturnix (Common quail).